Reading from the N-terminus, the 913-residue chain is Glutamate receptor ionotropic, kainate 2 (913 aa).

Topologically, residues Met-1–Pro-566 are extracellular. Residues Asn-72, Asn-78, Asn-280, Asn-383, Asn-417, Asn-428, and Asn-435 are each glycosylated (N-linked (GlcNAc...) asparagine). Residues Cys-101 and Cys-352 are joined by a disulfide bond. L-glutamate is bound by residues Pro-521, Ala-523, and Arg-528. A glycan (N-linked (GlcNAc...) asparagine) is linked at Asn-551. A helical membrane pass occupies residues Asp-567–Ala-587. Residues Arg-588–Gly-643 are Cytoplasmic-facing. A helical membrane pass occupies residues Ile-644–Leu-664. Over Thr-665–Asn-824 the chain is Extracellular. L-glutamate contacts are provided by Ala-694, Thr-695, and Glu-743. Residues Cys-755 and Cys-809 are joined by a disulfide bond. Asn-756 carries an N-linked (GlcNAc...) asparagine glycan. Residues Ile-825–Gly-845 form a helical membrane-spanning segment. Over Glu-846–Ala-913 the chain is Cytoplasmic.

It belongs to the glutamate-gated ion channel (TC 1.A.10.1) family. GRIK2 subfamily. In terms of assembly, homotetramer and heterotetramer with GRIK5. Tetramers may be formed by the dimerization of dimers.

It is found in the cell membrane. The protein resides in the postsynaptic cell membrane. The catalysed reaction is Ca(2+)(in) = Ca(2+)(out). It carries out the reaction Na(+)(in) = Na(+)(out). With respect to regulation, cold receptor activity activated by temperatures between 10-19 degrees Celsius. Its function is as follows. Ionotropic glutamate receptor that functions as a cation-permeable ligand-gated ion channel, gated by L-glutamate and the glutamatergic agonist kainic acid. L-glutamate acts as an excitatory neurotransmitter at many synapses in the central nervous system. Binding of the excitatory neurotransmitter L-glutamate induces a conformation change, leading to the opening of the cation channel, and thereby converts the chemical signal to an electrical impulse. The receptor then desensitizes rapidly and enters a transient inactive state, characterized by the presence of bound agonist. In terms of biological role, independent of its ionotropic glutamate receptor activity, acts as a thermoreceptor conferring sensitivity to cold temperatures. Functions in dorsal root ganglion neurons. The polypeptide is Glutamate receptor ionotropic, kainate 2 (grik2) (Xenopus laevis (African clawed frog)).